Reading from the N-terminus, the 346-residue chain is Arsenite methyltransferase (346 aa).

This sequence belongs to the methyltransferase superfamily. Arsenite methyltransferase family.

The enzyme catalyses arsenic triglutathione + [thioredoxin]-dithiol + S-adenosyl-L-methionine + 2 H2O = methylarsonous acid + [thioredoxin]-disulfide + 3 glutathione + S-adenosyl-L-homocysteine + H(+). The catalysed reaction is arsenic triglutathione + 2 [thioredoxin]-dithiol + 2 S-adenosyl-L-methionine + H2O = dimethylarsinous acid + 2 [thioredoxin]-disulfide + 3 glutathione + 2 S-adenosyl-L-homocysteine + 2 H(+). It catalyses the reaction arsenic triglutathione + 3 [thioredoxin]-dithiol + 3 S-adenosyl-L-methionine = trimethylarsine + 3 [thioredoxin]-disulfide + 3 glutathione + 3 S-adenosyl-L-homocysteine + 3 H(+). In terms of biological role, catalyzes the transfer of a methyl group from AdoMet to arsenite, producing methylated arsenicals. Involved in the conversion of As(III) to dimethylarsenate as the main product in the medium and also produces dimethylarsine and trimethylarsine gases. Reduces the arsenic toxicity in the cell and may contribute to the global arsenic cycling. The protein is Arsenite methyltransferase of Aquipseudomonas alcaligenes (strain ATCC 14909 / DSM 50342 / CCUG 1425 / JCM 20561 / NBRC 14159 / NCIMB 9945 / NCTC 10367 / 1577) (Pseudomonas alcaligenes).